The chain runs to 111 residues: Prostate and testis expressed protein 2 (111 aa).

The first 18 residues, 1 to 18 (MFVLVMICLFCQYWGVLN), serve as a signal peptide directing secretion. In terms of domain architecture, UPAR/Ly6 spans 27–108 (LLCYKCKKYH…CKHSNYCNLP (82 aa)). 4 disulfides stabilise this stretch: Cys29/Cys55, Cys32/Cys40, Cys47/Cys78, and Cys82/Cys99.

The protein belongs to the PATE family. As to expression, expressed in prostate, testis, brain and lung.

Its subcellular location is the secreted. The polypeptide is Prostate and testis expressed protein 2 (Pate2) (Mus musculus (Mouse)).